A 40-amino-acid polypeptide reads, in one-letter code: Amyloid-beta precursor protein (40 aa).

The protein belongs to the APP family. In terms of assembly, binds, via its C-terminus, to the PID domain of several cytoplasmic proteins, including APBB family members, the APBA family, MAPK8IP1, SHC1 and NUMB and DAB1. Binding to DAB1 inhibits its serine phosphorylation. Interacts (via NPXY motif) with DAB2 (via PID domain); the interaction is impaired by tyrosine phosphorylation of the NPXY motif. Also interacts with GPCR-like protein BPP, APPBP1, IB1, KNS2 (via its TPR domains), APPBP2 (via BaSS) and DDB1. In vitro, it binds MAPT via the MT-binding domains. Associates with microtubules in the presence of ATP and in a kinesin-dependent manner. Interacts, through a C-terminal domain, with GNAO1. Interacts with CPEB1, ANKS1B and AGER. Interacts with ITM2B. Interacts with ITM2C. Interacts with IDE. Can form homodimers; dimerization is enhanced in the presence of Cu(2+) ions. Can form homodimers; this is promoted by heparin binding. Interacts with SORL1 (via N-terminal ectodomain); this interaction retains APP in the trans-Golgi network and reduces processing into soluble APP-alpha and amyloid-beta peptides. Interacts with PLD3. Interacts with VDAC1. Interacts with NSG1; could regulate APP processing. Interacts with LRRK2. Interacts (via cytoplasmic domain) with KIF5B. Interacts (via C-terminus) with APBB2/FE65L1 (via C-terminus). Interacts (via intracellular domain) with APBB3. In terms of processing, proteolytically processed under normal cellular conditions. Cleavage either by alpha-secretase, beta-secretase or theta-secretase leads to generation and extracellular release of soluble APP peptides, S-APP-alpha and S-APP-beta, and the retention of corresponding membrane-anchored C-terminal fragments, C80, C83 and C99. Subsequent processing of C80 and C83 by gamma-secretase yields P3 peptides. This is the major secretory pathway and is non-amyloidogenic. Alternatively, presenilin/nicastrin-mediated gamma-secretase processing of C99 releases the amyloid-beta proteins, amyloid-beta protein 40 and amyloid-beta protein 42, major components of amyloid plaques, and the cytotoxic C-terminal fragments, gamma-CTF(50), gamma-CTF(57) and gamma-CTF(59). PSEN1 cleavage is more efficient with C83 than with C99 as substrate (in vitro). Amyloid-beta protein 40 and Amyloid-beta protein 42 are cleaved by ACE. Many other minor amyloid-beta peptides, amyloid-beta 1-X peptides, are found in cerebral spinal fluid (CSF) including the amyloid-beta X-15 peptides, produced from the cleavage by alpha-secretase.

The protein resides in the cell membrane. The protein localises to the membrane. It localises to the perikaryon. Its subcellular location is the cell projection. It is found in the growth cone. The protein resides in the clathrin-coated pit. The protein localises to the early endosome. It localises to the cytoplasmic vesicle. Functionally, functions as a cell surface receptor and performs physiological functions on the surface of neurons relevant to neurite growth, neuronal adhesion and axonogenesis. Interaction between APP molecules on neighboring cells promotes synaptogenesis. Involved in cell mobility and transcription regulation through protein-protein interactions. Can promote transcription activation through binding to APBB1-KAT5 and inhibit Notch signaling through interaction with Numb. Couples to apoptosis-inducing pathways such as those mediated by G(o) and JIP. Inhibits G(o)-alpha ATPase activity. Acts as a kinesin I membrane receptor, mediating the axonal transport of beta-secretase and presenilin 1. May be involved in copper homeostasis/oxidative stress through copper ion reduction. In vitro, copper-metallated APP induces neuronal death directly or is potentiated through Cu(2+)-mediated low-density lipoprotein oxidation. Can regulate neurite outgrowth through binding to components of the extracellular matrix such as heparin and collagen I and IV. Induces a AGER-dependent pathway that involves activation of p38 MAPK, resulting in internalization of amyloid-beta peptide and mitochondrial dysfunction in cultured cortical neurons. Provides Cu(2+) ions for GPC1 which are required for release of nitric oxide (NO) and subsequent degradation of the heparan sulfate chains on GPC1. This Felis catus (Cat) protein is Amyloid-beta precursor protein.